We begin with the raw amino-acid sequence, 129 residues long: Serum amyloid A protein (129 aa).

A signal peptide spans 1–18 (MKLFPGLLFCSLVLGVSG). At glutamine 19 the chain carries Pyrrolidone carboxylic acid. The tract at residues 92-129 (GDSGHGAEDSKADQAANEWGRSGKDPNHFRPAGLPDKY) is disordered. Positions 112-129 (RSGKDPNHFRPAGLPDKY) are cleaved as a propeptide — often cleaved during amyloidogenesis.

This sequence belongs to the SAA family. In terms of processing, this protein is the precursor of amyloid protein A, which is formed by the removal of residues from the C-terminal end. Expressed by the liver; secreted in plasma.

Its subcellular location is the secreted. Major acute phase reactant. Apolipoprotein of the HDL complex. The sequence is that of Serum amyloid A protein (SAA1) from Canis lupus familiaris (Dog).